A 79-amino-acid chain; its full sequence is UPF0180 protein BCB4264_A1446 (79 aa).

The protein belongs to the UPF0180 family.

The chain is UPF0180 protein BCB4264_A1446 from Bacillus cereus (strain B4264).